The primary structure comprises 245 residues: Probable phosphatase YPTB2019 (245 aa).

Residues histidine 7, histidine 9, histidine 15, histidine 40, glutamate 73, histidine 101, histidine 131, aspartate 192, and histidine 194 each coordinate Zn(2+).

This sequence belongs to the PHP family. In terms of assembly, homotrimer. It depends on Zn(2+) as a cofactor.

The sequence is that of Probable phosphatase YPTB2019 from Yersinia pseudotuberculosis serotype I (strain IP32953).